The primary structure comprises 231 residues: Large ribosomal subunit protein uL1 (231 aa).

Belongs to the universal ribosomal protein uL1 family. In terms of assembly, part of the 50S ribosomal subunit.

Functionally, binds directly to 23S rRNA. The L1 stalk is quite mobile in the ribosome, and is involved in E site tRNA release. Protein L1 is also a translational repressor protein, it controls the translation of the L11 operon by binding to its mRNA. The chain is Large ribosomal subunit protein uL1 from Carboxydothermus hydrogenoformans (strain ATCC BAA-161 / DSM 6008 / Z-2901).